Consider the following 317-residue polypeptide: L-lactate dehydrogenase 1 (317 aa).

Residues valine 17, aspartate 38, lysine 43, tyrosine 69, and 83-84 (GA) each bind NAD(+). Substrate contacts are provided by glutamine 86 and arginine 92. NAD(+)-binding positions include serine 105, 122 to 124 (ATN), and serine 147. 124–127 (NPVD) serves as a coordination point for substrate. A substrate-binding site is contributed by 152 to 155 (DSAR). Histidine 179 (proton acceptor) is an active-site residue. Tyrosine 223 carries the post-translational modification Phosphotyrosine. Threonine 232 contacts substrate.

This sequence belongs to the LDH/MDH superfamily. LDH family. Homotetramer.

Its subcellular location is the cytoplasm. It carries out the reaction (S)-lactate + NAD(+) = pyruvate + NADH + H(+). It participates in fermentation; pyruvate fermentation to lactate; (S)-lactate from pyruvate: step 1/1. Its function is as follows. Catalyzes the conversion of lactate to pyruvate (Potential). Appears to be the primary factor that allows S.aureus growth during nitrosative stress in both aerobically and anaerobically cultured cells. This is L-lactate dehydrogenase 1 from Staphylococcus aureus (strain bovine RF122 / ET3-1).